We begin with the raw amino-acid sequence, 496 residues long: Flt3-interacting zinc finger protein 1 (496 aa).

The residue at position 1 (methionine 1) is an N-acetylmethionine. 6 C2H2-type zinc fingers span residues 23–45, 51–73, 79–101, 107–130, 200–222, and 228–250; these read FHCS…FARH, HACP…LRSH, YRCS…QVVH, YCCL…KRQH, FACG…WAAH, and FKCP…KLTH. Residues 250–280 are disordered; that stretch reads HDLQGPGAPPAQAWAAGPGAGPETAGEGTAA. A compositionally biased stretch (low complexity) spans 259 to 280; that stretch reads PAQAWAAGPGAGPETAGEGTAA. C2H2-type zinc fingers lie at residues 331 to 352, 358 to 381, 414 to 436, 442 to 464, and 470 to 492; these read YQCD…LEAH, YGCG…RVSH, FGCS…VLVH, FPCL…RLLH, and FPCH…LKLH. The disordered stretch occupies residues 378 to 412; that stretch reads RVSHGEGGGEEAATAAREREPASGEPPSGSGRGKK.

In terms of assembly, interacts with FLT3 cytoplasmic catalytic domain, following receptor stimulation, in a kinase-independent manner. Does not interact with other structurally related receptor tyrosine kinases, including KIT, CSF1R and PDGFR. Interacts with NRL. In terms of tissue distribution, widely expressed.

It localises to the cytoplasm. The protein localises to the nucleus. Functionally, may be a transcriptional repressor of NRL function in photoreceptors. Does not repress CRX-mediated transactivation. The sequence is that of Flt3-interacting zinc finger protein 1 (FIZ1) from Homo sapiens (Human).